The following is a 587-amino-acid chain: MDLPGDSSTPGRQRLCRQPHAGALWGAKSPKRPKLQPLGAPSPLEKASRRVLAVVLEDVMAARMVPLEPQEESSTPRHHSNHRDSVRSQPPASPPRQAMWSPQARPPDPLHLCREPLSRIRRPPSTPRRQSRTTPGPDEGPSQKVDQVHQPTLVVMLQDIASSRPRAEGFADEAPNFIIPARRAEPKVMVHQPKPPSRDLPAPSRPSALSANPLASPPPAPDPVLEPPSTPPPSSLLRPRLSPWGLAPLFHSVRSKLESFADIFLTPNKAPRPPPPSPPMKLELKIAISEAGQPGASEGTVTVSPRPPIRQWRAQDQNPSATLTKPSLGRSHSCPDLGPPGPDPCSWPPVPAPSSRPRPRRHTVGGGEMAKAPPPPRPCLRKEVFPLGGVGASPPLVTSCSSTASTSSFSEPAEPRLSSTKRKEPRAPEDQVLPDSETKTIGKVSRFRIRRTPARSQINLTPMGLPRPVRLNKKEFSLEEIYTNKNYQSPTTRRTFETIFEEPRERNGTLIFTSSRKLRRTVEFRDSSLPRSRRPSRGARATAGRTLPPSLAPSPDVEPLLQQRLQELDASLLEEEEEGDQDQPHRT.

Met1 carries the N-acetylmethionine modification. Polar residues predominate over residues 1–11; it reads MDLPGDSSTPG. Disordered stretches follow at residues 1–48, 65–152, and 181–241; these read MDLP…EKAS, VPLE…HQPT, and ARRA…RPRL. Positions 1 to 135 are sufficient for heterochromatin association in interphase and chromatin association in anaphase; sequence MDLPGDSSTP…TPRRQSRTTP (135 aa). Positions 85–378 are required for the interaction with GRB2 and sufficient to promote the phosphorylation of AKT and cell proliferation; it reads SVRSQPPASP…MAKAPPPPRP (294 aa). The interval 136 to 365 is required for nuclear lamina association; sequence GPDEGPSQKV…RPRPRRHTVG (230 aa). Over residues 200–214 the composition is skewed to low complexity; the sequence is LPAPSRPSALSANPL. The span at 215–234 shows a compositional bias: pro residues; sequence ASPPPAPDPVLEPPSTPPPS. Ser277 is modified (phosphoserine). 2 disordered regions span residues 290–444 and 524–587; these read EAGQ…IGKV and FRDS…PHRT. Over residues 314–325 the composition is skewed to polar residues; the sequence is AQDQNPSATLTK. The segment covering 337-356 has biased composition (pro residues); the sequence is LGPPGPDPCSWPPVPAPSSR. Over residues 398–410 the composition is skewed to low complexity; that stretch reads TSCSSTASTSSFS. Residues 519-536 form a required for nuclear localization region; that stretch reads RRTVEFRDSSLPRSRRPS. Low complexity predominate over residues 538–548; the sequence is GARATAGRTLP. Positions 572-581 are enriched in acidic residues; that stretch reads LLEEEEEGDQ.

Interacts (via proline-rich region) with GRB2 (via SH3 domain 2). Interacts (via N-terminus) with CBX5.

It localises to the chromosome. It is found in the nucleus. The protein resides in the nucleus lamina. Its subcellular location is the nucleoplasm. In terms of biological role, functions in tethering peripheral heterochromatin to the nuclear lamina during interphase, possibly through the interaction with heterochromatin protein CBX5/HP1 alpha. Might play a role in reattaching heterochromatin to the nuclear lamina at mitotic exit. Promotes myoblast differentiation during skeletal myogenesis, possibly by stimulating transcription factor MyoD activity via binding to CBX5/HP1 alpha. Involved in the positive regulation of the PI3K-Akt-mTOR signaling pathway and in promoting cell proliferation, possibly via binding to GRB2. This is Proline-rich protein 14 (PRR14) from Bos taurus (Bovine).